The following is a 392-amino-acid chain: Galactokinase (392 aa).

4 residues coordinate alpha-D-galactose: Arg-37, Glu-43, His-44, and Asp-46. Gly-136, Gly-138, Ser-140, and Ser-141 together coordinate ATP. Residue Asp-186 participates in alpha-D-galactose binding. Asp-186 functions as the Proton acceptor in the catalytic mechanism. At Ser-230 the chain carries Phosphoserine. Tyr-236 contributes to the alpha-D-galactose binding site.

It belongs to the GHMP kinase family. GalK subfamily. In terms of assembly, homodimer.

It carries out the reaction alpha-D-galactose + ATP = alpha-D-galactose 1-phosphate + ADP + H(+). It functions in the pathway carbohydrate metabolism; galactose metabolism. Its function is as follows. Catalyzes the transfer of a phosphate from ATP to alpha-D-galactose and participates in the first committed step in the catabolism of galactose. The polypeptide is Galactokinase (GALK1) (Canis lupus familiaris (Dog)).